Reading from the N-terminus, the 771-residue chain is Solute carrier family 7 member 14 (771 aa).

6 helical membrane passes run 58-78 (LISL…SGLV), 83-103 (AGPG…LSGV), 119-141 (AYTY…NLIL), 187-207 (YPDL…ALGV), 216-236 (VLNV…LFFI), and 251-271 (WSGV…FDII). Asn282 is a glycosylation site (N-linked (GlcNAc...) asparagine). 5 consecutive transmembrane segments (helical) span residues 291-311 (ASLV…TLMV), 336-356 (FVVA…SLFP), 360-380 (VIYA…VSSY), 384-404 (PVVA…LVSL), and 407-427 (LIEM…VCVL). 3 positions are modified to phosphoserine: Ser465, Ser468, and Ser488. The next 4 membrane-spanning stretches (helical) occupy residues 565 to 585 (VTIC…FIIF), 596 to 616 (WAIL…FVIL), 628 to 648 (MAPC…YLML), and 655 to 675 (WIRF…YGIW). Asn676 is a glycosylation site (N-linked (GlcNAc...) asparagine). The tract at residues 736-771 (DAKANGRTSSKAKSKSKHKQNSEALIANDELDYSPE) is disordered. A compositionally biased stretch (basic residues) spans 745–754 (SKAKSKSKHK). Residues Ser757 and Ser769 each carry the phosphoserine modification.

The protein belongs to the amino acid-polyamine-organocation (APC) superfamily. Cationic amino acid transporter (CAT) (TC 2.A.3.3) family. As to expression, expressed in skin fibroblasts.

The protein resides in the lysosome membrane. The enzyme catalyses 4-aminobutanoate(in) = 4-aminobutanoate(out). In terms of biological role, imports 4-aminobutanoate (GABA) into lysosomes. May act as a GABA sensor that regulates mTORC2-dependent INS signaling and gluconeogenesis. The transport mechanism and substrate selectivity remain to be elucidated. The sequence is that of Solute carrier family 7 member 14 from Homo sapiens (Human).